The following is a 605-amino-acid chain: Phosphoenolpyruvate carboxykinase [GTP] (605 aa).

Residues Arg-79 and 218-220 (YGG) contribute to the substrate site. Positions 227 and 247 each coordinate Mn(2+). Ser-269 contributes to the substrate binding site. A GTP-binding site is contributed by 270-275 (ACGKTN). Cys-271 is a catalytic residue. Asp-294 contacts Mn(2+). Residues 364–381 (LTDWKGRDWTPQSDEKAA) show a composition bias toward basic and acidic residues. Residues 364–385 (LTDWKGRDWTPQSDEKAAHPNS) form a disordered region. 384 to 386 (NSR) serves as a coordination point for substrate. Residues Arg-386, Arg-417, and 513 to 516 (FGEN) each bind GTP.

This sequence belongs to the phosphoenolpyruvate carboxykinase [GTP] family. In terms of assembly, monomer. The cofactor is Mn(2+).

The protein localises to the cytoplasm. The catalysed reaction is oxaloacetate + GTP = phosphoenolpyruvate + GDP + CO2. Its pathway is carbohydrate biosynthesis; gluconeogenesis. Catalyzes the conversion of oxaloacetate (OAA) to phosphoenolpyruvate (PEP), the rate-limiting step in the metabolic pathway that produces glucose from lactate and other precursors derived from the citric acid cycle. This Saccharopolyspora erythraea (strain ATCC 11635 / DSM 40517 / JCM 4748 / NBRC 13426 / NCIMB 8594 / NRRL 2338) protein is Phosphoenolpyruvate carboxykinase [GTP].